We begin with the raw amino-acid sequence, 2155 residues long: MNYSSLLRIWVSFIFALVRHQAQPRELMYPFWQNDTRTPKVDDGSSSEIKLAIPVFFFGVPYRTVYVNNNGVVSFNVLVSQFTPESFPLTDGRAFIAPFWADVHNGIRGEIYYRETMDPAILRRATKDIRKYFKDMTTFSATWVFIVTWEEVTFYGGSSTTPVNTFQAVLVSDGSYTFTLFNYYEINWTTGTASGGDPLTGLGGVMAQAGFNGGNLTNFFSLPGSRTPEIVNIQETTNVNVPGRWAFKVDGKEIDPANGCTSRGQFLRRGEVFWDDLNCTIKCRCLDFNNEIYCQEASCSPYEVCEPKGRFFYCSPVETSTCVVFGEPHYHTFDGFLFHFQGSCAYLLARQCLQTSSLPFFSVEAKNEHRGGSAVSWVKELSVEVNGYKILIPKGSYGKVKVNDLVTSLPVTLELGAVKIYQSGMSTAVETDFGLLVTFDGQHYASISIPGSYINSTCGLCGNYNKNPLDDFLRPDGRPAMSVLDLGESWRVYHADWKCGSGCVDNCTQCDAATEALYFGSDYCGFLNKTDGPLWECGTVVDATAFVHSCVYDLCSVRDNGTLLCQAIQAYALVCQALGIPIGDWRIQTGCVSTVRCPSFSHYSVCTSSCPDTCSDLTASQNCATPCTEGCECNEGFVLSTSQCVPLHKCGCDFDGHYYTMGEFFWATANCTVQCLCEEGGDVYCFNKTCRSGEVCAVEDGYQGCFPKRETVCLLSQNQVLHTFDGAAYAFPSELSYTLLKTCPERPEYLEIDINKKKPDAGPAWLRGVRILVADQEVKIGGVGALEVKLNGQDVELPFFHPSGRLEIHRNKNSTTVESKGVVSVQYSDVGLLYIRLSTMYFNCTGGLCGFFNANASDEFCLPNGKCTDNLAVFLESWTTFEEICNGECGDLLKACNNDSELLKFYRSRSRCGIINDPSNSSFLECHGVVNVTAYYRTCLFRLCQSGGNESELCDSVARYASACKNADVEVGPWRTYDFCPLECPENSHFEECMTCTETCETLALGPICVDSCSEGCQCDEGYALQGSQCVPRSECGCNFEGHQLATNETFWVDQDCQIFCYCNGTDNSVHCETIPCRDDEYCMEESGLYYCQPRTDASCIVSGYGHYLTFDGYPFDFQTSCPLILCTTGSRPISDSFPKFIVTAKNEDRDPSLALWVKQVDVNVFGYSIVIHRAYKHTVLVNNERLYLPLKLGQGKINIFSFGFHVVVETDFGLKVVYDWKTFLSITVPRSMQNGTYGLCGRYNGNPDDDLEMPMGLPALSINEFGQSWVKRDTFCQVGCGDRCPSCAKVEGFSKVQQLCSLIPNQNAGFAKCHSKVNPTFFYKNCLFDSCIDGGAVQTACSWLQNYASTCQTQGIAVTGWRNYTSCSVTCPPNSHYESCVSVCQPRCAAIRLKSDCNHYCVEGCQCDAGYVLNGKSCILPHNCGCYSDGKYYEPKQLFWNGDCTRRCRCFRRNLIQCDPRQCKSDEECALRSGVRGCFSTKTSYCLAAGGGVFRTFDGAFLRFPANCAFVLSTICQKLPDISFQLIINFDKWSSPNLTIISPVYFYINEEQILINDRNTVKVNGTQVNVPFITGLATKIYSSEGFLVIDTSPDIQIYYNGFNVIKISISERLQNKVCGLCGNFNGDMTDDYVTLRGKPVVSSVVLAQSWKTNGMQKRPLAPSCNELQFSQYAATCDNVHIQAMQGDGYCLKLTDMKGFFQPCYGLLDPLPFYESCYLDGCYNHKKFQLCGSLAAYGEACRSFGILSTEWIEKENCSGVVEDPCVGADCPNRTCELDNGGELCGCIEPPPYGNNSHDIIDAEVTCKAAQMEVSISKCKLFQLGFEREGVRINDRQCSGIEGEDFISFQINNTKGNCGNIVQSNGTHIMYKNTIWIESANNTGNIITRDRTINVEFSCAYELDIKISLDSVVKPMLSVINLTVPTQEGSFTTKMALYKNASYKHPYRQGEVVLTTRDVLYVGVFVVGADSTHLILTLNKCYATPSRDSNDKLRYFIIEGGCQNIKDNTIGIEENGVSLTCRFHVTVFKFIGDYDEVHLHCAVSLCDSEKYSCKINCPQNSRIATDYSKEHKEQIISVGPIRRKRLDWCEDNGGCEQICTSRVDGPLCSCVTGSLQEDGRSCRASNSSVELQVWTLLLIMTQISLWHLIYKSGATS.

A signal peptide spans 1–24 (MNYSSLLRIWVSFIFALVRHQAQP). Asparagine 34, asparagine 187, asparagine 215, asparagine 278, asparagine 455, asparagine 506, asparagine 528, and asparagine 560 each carry an N-linked (GlcNAc...) asparagine glycan. In terms of domain architecture, NIDO spans 98–252 (PFWADVHNGI…GRWAFKVDGK (155 aa)). Positions 260-314 (CTSRGQFLRRGEVFWDDLNCTIKCRCLDFNNEIYCQEASCSPYEVCEPKGRFFYC) constitute a VWFC domain. Positions 320-500 (STCVVFGEPH…RVYHADWKCG (181 aa)) constitute a VWFD 1 domain. 2 cysteine pairs are disulfide-bonded: cysteine 322/cysteine 461 and cysteine 344/cysteine 499. Residues 597–650 (CPSFSHYSVCTSSCPDTCSDLTASQNCATPCTEGCECNEGFVLSTSQCVPLHKC) enclose the TIL 1 domain. Asparagine 670, asparagine 687, asparagine 813, asparagine 843, asparagine 855, asparagine 898, asparagine 920, asparagine 931, and asparagine 949 each carry an N-linked (GlcNAc...) asparagine glycan. The region spanning 711-886 (TVCLLSQNQV…SWTTFEEICN (176 aa)) is the VWFD 2 domain. A disulfide bond links cysteine 713 and cysteine 849. The region spanning 984–1036 (CPENSHFEECMTCTETCETLALGPICVDSCSEGCQCDEGYALQGSQCVPRSEC) is the TIL 2 domain. N-linked (GlcNAc...) asparagine glycosylation is found at asparagine 1048, asparagine 1064, asparagine 1235, and asparagine 1364. The VWFD 3 domain occupies 1098–1278 (ASCIVSGYGH…SWVKRDTFCQ (181 aa)). Intrachain disulfides connect cysteine 1100–cysteine 1241 and cysteine 1122–cysteine 1277. The region spanning 1372–1425 (CPPNSHYESCVSVCQPRCAAIRLKSDCNHYCVEGCQCDAGYVLNGKSCILPHNC) is the TIL 3 domain. In terms of domain architecture, VWFD 4 spans 1485-1666 (SYCLAAGGGV…QKRPLAPSCN (182 aa)). 7 disulfide bridges follow: cysteine 1487/cysteine 1622, cysteine 1509/cysteine 1665, cysteine 1717/cysteine 1775, cysteine 1741/cysteine 1784, cysteine 1786/cysteine 1818, cysteine 1806/cysteine 1898, and cysteine 1837/cysteine 1857. 10 N-linked (GlcNAc...) asparagine glycosylation sites follow: asparagine 1538, asparagine 1565, asparagine 1756, asparagine 1772, asparagine 1794, asparagine 1851, asparagine 1864, asparagine 1880, asparagine 1920, and asparagine 1939. The region spanning 1805–2059 (TCKAAQMEVS…YSCKINCPQN (255 aa)) is the ZP domain. 3 disulfides stabilise this stretch: cysteine 1980/cysteine 2040, cysteine 2001/cysteine 2056, and cysteine 2045/cysteine 2052. Asparagine 2091 carries GPI-anchor amidated asparagine lipidation. The propeptide at 2092–2155 (GGCEQICTSR…HLIYKSGATS (64 aa)) is removed in mature form.

As to quaternary structure, may form homomeric filament after self-association or heteromeric filament after association with beta-tectorin. Interacts with CEACAM16. 3 products of tectorin seem to exist: HMM, MMM and LMM. They may be generated by active processing or the result of proteolysis occurring between intrachain disulfide bonds. In terms of processing, the presence of a hydrophobic C-terminus preceded by a potential cleavage site strongly suggests that tectorins are synthesized as glycosylphosphatidylinositol-linked, membrane-bound precursors. Tectorins are targeted to the apical surface of the inner ear epithelia by the lipid and proteolytically released into the extracellular compartment. As to expression, cochlea-specific.

The protein localises to the cell membrane. Its subcellular location is the secreted. It localises to the extracellular space. It is found in the extracellular matrix. Its function is as follows. One of the major non-collagenous components of the tectorial membrane. The tectorial membrane is an extracellular matrix of the inner ear that covers the neuroepithelium of the cochlea and contacts the stereocilia bundles of specialized sensory hair cells. Sound induces movement of these hair cells relative to the tectorial membrane, deflects the stereocilia and leads to fluctuations in hair-cell membrane potential, transducing sound into electrical signals. This chain is Alpha-tectorin (Tecta), found in Mus musculus (Mouse).